A 140-amino-acid polypeptide reads, in one-letter code: 3-hydroxyacyl-[acyl-carrier-protein] dehydratase FabZ (140 aa).

The active site involves His-48.

The protein belongs to the thioester dehydratase family. FabZ subfamily.

The protein resides in the cytoplasm. The enzyme catalyses a (3R)-hydroxyacyl-[ACP] = a (2E)-enoyl-[ACP] + H2O. Involved in unsaturated fatty acids biosynthesis. Catalyzes the dehydration of short chain beta-hydroxyacyl-ACPs and long chain saturated and unsaturated beta-hydroxyacyl-ACPs. This is 3-hydroxyacyl-[acyl-carrier-protein] dehydratase FabZ from Pelotomaculum thermopropionicum (strain DSM 13744 / JCM 10971 / SI).